Here is a 200-residue protein sequence, read N- to C-terminus: Methylamine utilization protein MauD (200 aa).

A helical transmembrane segment spans residues phenylalanine 4–leucine 24. The Thioredoxin domain maps to proline 49–threonine 183.

Its subcellular location is the membrane. It participates in one-carbon metabolism; methylamine degradation. Functionally, may be specifically involved in the processing, transport, and/or maturation of the MADH beta-subunit. The sequence is that of Methylamine utilization protein MauD (mauD) from Paracoccus denitrificans.